Reading from the N-terminus, the 178-residue chain is Putative metal-dependent hydrolase GK0616 (178 aa).

Residues histidine 68, histidine 161, and histidine 165 each contribute to the Zn(2+) site.

It belongs to the metal hydrolase YfiT family. Homodimer. Requires Zn(2+) as cofactor.

The protein localises to the cytoplasm. Functionally, possible metal-dependent hydrolase. This Geobacillus kaustophilus (strain HTA426) protein is Putative metal-dependent hydrolase GK0616.